The sequence spans 389 residues: Alcohol dehydrogenase-like 5 (389 aa).

The Zn(2+) site is built by Cys-54, Thr-56, His-77, Cys-107, Cys-110, Cys-113, Cys-121, and Cys-186. An alcohol-binding residues include Thr-56 and His-77. Residue Thr-56 coordinates NAD(+). NAD(+)-binding positions include 211 to 216 (GLGAVG), Asp-235, Lys-240, 305 to 307 (LGI), Phe-332, and Arg-382.

Belongs to the zinc-containing alcohol dehydrogenase family. Class-III subfamily. As to quaternary structure, homodimer. It depends on Zn(2+) as a cofactor.

It localises to the cytoplasm. The enzyme catalyses a primary alcohol + NAD(+) = an aldehyde + NADH + H(+). The catalysed reaction is a secondary alcohol + NAD(+) = a ketone + NADH + H(+). In Arabidopsis thaliana (Mouse-ear cress), this protein is Alcohol dehydrogenase-like 5.